The following is a 329-amino-acid chain: Beta-ketoacyl-[acyl-carrier-protein] synthase III (329 aa).

Residues Cys-123 and His-256 contribute to the active site. An ACP-binding region spans residues 257-261 (QANIR). The active site involves Asn-286.

Belongs to the thiolase-like superfamily. FabH family. In terms of assembly, homodimer.

The protein resides in the cytoplasm. The enzyme catalyses malonyl-[ACP] + acetyl-CoA + H(+) = 3-oxobutanoyl-[ACP] + CO2 + CoA. It functions in the pathway lipid metabolism; fatty acid biosynthesis. Its function is as follows. Catalyzes the condensation reaction of fatty acid synthesis by the addition to an acyl acceptor of two carbons from malonyl-ACP. Catalyzes the first condensation reaction which initiates fatty acid synthesis and may therefore play a role in governing the total rate of fatty acid production. Possesses both acetoacetyl-ACP synthase and acetyl transacylase activities. Its substrate specificity determines the biosynthesis of branched-chain and/or straight-chain of fatty acids. The sequence is that of Beta-ketoacyl-[acyl-carrier-protein] synthase III from Burkholderia lata (strain ATCC 17760 / DSM 23089 / LMG 22485 / NCIMB 9086 / R18194 / 383).